A 307-amino-acid polypeptide reads, in one-letter code: tRNA N(3)-methylcytidine methyltransferase trm140 (307 aa).

Residues W83, Y87, G125, D150, D176, L177, and I197 each contribute to the S-adenosyl-L-methionine site.

The protein belongs to the methyltransferase superfamily. METL family.

It carries out the reaction cytidine(32) in tRNA(Thr) + S-adenosyl-L-methionine = N(3)-methylcytidine(32) in tRNA(Thr) + S-adenosyl-L-homocysteine + H(+). Functionally, S-adenosyl-L-methionine-dependent methyltransferase that mediates N(3)-methylcytidine modification of residue 32 of the tRNA anticodon loop of tRNA(Thr). Does not catalyze N(3)-methylcytidine modification of tRNA(Ser). The polypeptide is tRNA N(3)-methylcytidine methyltransferase trm140 (Schizosaccharomyces pombe (strain 972 / ATCC 24843) (Fission yeast)).